The primary structure comprises 525 residues: MKYIIVTGGVMSGLGKGITAASIGRILKNRGYRVTAVKIDPYLNIDAGTMNPAQHGEVFVLGDGSEVDLDLGNYERFLDIELSGPHNITTGKVYRSVIEKERRGDYLGDTVQIIPHITDEIKCRIEQAATEGDENGAAEICLVEVGGTVGDIESMPFLEAVRQMRGELPEDEMVLIHVTLIPEDTMGDMKTKPTQHSVKALREAGLYADMIVGRSEHPIGLHTKRKIASFCDVAAQAVVSATTVPDIYQVPVELEKEGLADAITTHLHLDRREALEEWYNVVAREYTSRITVAIVSKYGIEDVYLSIKEALKHAGRALATEVKIVWLDAERYEPCQLADVDGILIPGGFGIRGIEGKIRAIQYAREHNIPFLGLCLGFQLAVVEFARHVLGWKDACSEEIGDGRHVIAILPEQEGVDDLGGTMRLGNYPVTVKAGTIAEQLYRRSTITERHRHRYEVNPEEISALEEAGLVFSGLNGPRMEICELPGHPFFFATQFHPEFRSRPTRPAPAFLGFVSACRKNKKTP.

Residues 1–269 are amidoligase domain; it reads MKYIIVTGGV…ADAITTHLHL (269 aa). CTP is bound at residue Ser12. Residue Ser12 participates in UTP binding. Residues 13-18 and Asp70 contribute to the ATP site; that span reads GLGKGI. 2 residues coordinate Mg(2+): Asp70 and Glu144. CTP is bound by residues 151 to 153, 190 to 195, and Lys226; these read DIE and KTKPTQ. Residues 190–195 and Lys226 contribute to the UTP site; that span reads KTKPTQ. The Glutamine amidotransferase type-1 domain maps to 292-524; the sequence is VAIVSKYGIE…VSACRKNKKT (233 aa). Gly348 contributes to the L-glutamine binding site. Cys375 serves as the catalytic Nucleophile; for glutamine hydrolysis. Residues 376-379, Glu399, and Arg454 each bind L-glutamine; that span reads LGFQ. Active-site residues include His497 and Glu499.

Belongs to the CTP synthase family. As to quaternary structure, homotetramer.

The enzyme catalyses UTP + L-glutamine + ATP + H2O = CTP + L-glutamate + ADP + phosphate + 2 H(+). The catalysed reaction is L-glutamine + H2O = L-glutamate + NH4(+). It catalyses the reaction UTP + NH4(+) + ATP = CTP + ADP + phosphate + 2 H(+). It participates in pyrimidine metabolism; CTP biosynthesis via de novo pathway; CTP from UDP: step 2/2. With respect to regulation, allosterically activated by GTP, when glutamine is the substrate; GTP has no effect on the reaction when ammonia is the substrate. The allosteric effector GTP functions by stabilizing the protein conformation that binds the tetrahedral intermediate(s) formed during glutamine hydrolysis. Inhibited by the product CTP, via allosteric rather than competitive inhibition. Functionally, catalyzes the ATP-dependent amination of UTP to CTP with either L-glutamine or ammonia as the source of nitrogen. Regulates intracellular CTP levels through interactions with the four ribonucleotide triphosphates. This chain is CTP synthase, found in Methanosphaerula palustris (strain ATCC BAA-1556 / DSM 19958 / E1-9c).